Here is a 134-residue protein sequence, read N- to C-terminus: ATP synthase epsilon chain (134 aa).

This sequence belongs to the ATPase epsilon chain family. In terms of assembly, F-type ATPases have 2 components, CF(1) - the catalytic core - and CF(0) - the membrane proton channel. CF(1) has five subunits: alpha(3), beta(3), gamma(1), delta(1), epsilon(1). CF(0) has three main subunits: a, b and c.

The protein localises to the cell inner membrane. In terms of biological role, produces ATP from ADP in the presence of a proton gradient across the membrane. This Syntrophobacter fumaroxidans (strain DSM 10017 / MPOB) protein is ATP synthase epsilon chain.